A 772-amino-acid chain; its full sequence is Serine/threonine-protein kinase tousled-like 2 (772 aa).

The interval 24-126 (GVSKGPLNSE…SNPLPRRVEQ (103 aa)) is disordered. A compositionally biased stretch (polar residues) spans 29–44 (PLNSESSNQSLCSVGS). Residues 46–61 (SDKEVETPEKKQNDQR) show a composition bias toward basic and acidic residues. S73, S94, S99, S115, S117, and S134 each carry phosphoserine. The disordered stretch occupies residues 180-208 (QNSPSSTGSGNTEHSCSSQKQISIQHRQT). Positions 225-276 (NSDLEKKEGRIDDLLRANCDLRRQIDEQQKMLEKYKERLNRCVTMSKKLLIE) are required for interaction with TLK1 and DYNLL1/LC8. Coiled-coil stretches lie at residues 225–276 (NSDL…LLIE) and 317–347 (AFQN…KRKP). The interval 342 to 385 (LAKRKPPAMGQAPPATNEQKQRKSKTNGAENETPSSGNTELKDT) is disordered. A compositionally biased stretch (polar residues) spans 367–380 (TNGAENETPSSGNT). The stretch at 403-451 (HEQEEIFKLRLGHLKKEEAEIQAELERLERVRNLHIRELKRIHNEDNSQ) forms a coiled coil. Residues 462 to 741 (YLLLHLLGRG…VQQLACDPYL (280 aa)) enclose the Protein kinase domain. Residues 468-476 (LGRGGFSEV) and K491 each bind ATP. D592 serves as the catalytic Proton acceptor. S750 is modified (phosphoserine; by CHEK1).

This sequence belongs to the protein kinase superfamily. Ser/Thr protein kinase family. In terms of assembly, monomer. May form homodimers; homodimerization may enhance autophosphoylation and enzymatic activity. Heterodimer with TLK1. Interacts with YWHAZ; association with 14-3-3 proteins such as YWHAZ regulates subcellular location. May also interact with FEZ1/LZTS1 and FEZ2. Interacts with CHD7 and CHD8. Interacts with DYNLL1/LC8. It depends on Mg(2+) as a cofactor. Post-translationally, phosphorylated at Ser-750, probably by CHEK1. In terms of processing, autophosphorylated; phosphorylation promotes the assembly of higher order oligomers and enzymatic activity. Detected in placenta, fetal liver, kidney, pancreas, heart and skeletal muscle. Highly expressed in testis. Detected in spleen, thymus, colon, ovary, small intestine, prostate and peripheral blood leukocytes. Almost undetectable in liver and lung.

It is found in the nucleus. It localises to the nucleoplasm. Its subcellular location is the cytoplasm. The protein resides in the perinuclear region. The protein localises to the cytoskeleton. The catalysed reaction is L-seryl-[protein] + ATP = O-phospho-L-seryl-[protein] + ADP + H(+). It carries out the reaction L-threonyl-[protein] + ATP = O-phospho-L-threonyl-[protein] + ADP + H(+). With respect to regulation, cell cycle-regulated, with maximal activity in the S-phase. Rapidly and transiently inhibited by phosphorylation following the generation of DNA double-stranded breaks during S-phase, probably by CHEK1, possibly at Ser-750. This inhibition is cell cycle checkpoint- and ATM-dependent. Serine/threonine-protein kinase involved in the process of chromatin assembly and probably also DNA replication, transcription, repair, and chromosome segregation. Phosphorylates the chromatin assembly factors ASF1A and ASF1B. Phosphorylation of ASF1A prevents its proteasome-mediated degradation, thereby enhancing chromatin assembly. Negative regulator of amino acid starvation-induced autophagy. In Homo sapiens (Human), this protein is Serine/threonine-protein kinase tousled-like 2.